The following is a 376-amino-acid chain: uncharacterized protein (376 aa).

It belongs to the mimivirus L17x/L18x family.

This is an uncharacterized protein from Acanthamoeba polyphaga (Amoeba).